A 572-amino-acid polypeptide reads, in one-letter code: Dihydroxy-acid dehydratase (572 aa).

C57 contacts [2Fe-2S] cluster. D89 provides a ligand contact to Mg(2+). C130 is a [2Fe-2S] cluster binding site. The Mg(2+) site is built by D131 and K132. K132 is subject to N6-carboxylysine. Residue C202 participates in [2Fe-2S] cluster binding. E453 serves as a coordination point for Mg(2+). Catalysis depends on S479, which acts as the Proton acceptor.

Belongs to the IlvD/Edd family. In terms of assembly, homodimer. [2Fe-2S] cluster serves as cofactor. It depends on Mg(2+) as a cofactor.

The enzyme catalyses (2R)-2,3-dihydroxy-3-methylbutanoate = 3-methyl-2-oxobutanoate + H2O. It carries out the reaction (2R,3R)-2,3-dihydroxy-3-methylpentanoate = (S)-3-methyl-2-oxopentanoate + H2O. Its pathway is amino-acid biosynthesis; L-isoleucine biosynthesis; L-isoleucine from 2-oxobutanoate: step 3/4. It participates in amino-acid biosynthesis; L-valine biosynthesis; L-valine from pyruvate: step 3/4. Functionally, functions in the biosynthesis of branched-chain amino acids. Catalyzes the dehydration of (2R,3R)-2,3-dihydroxy-3-methylpentanoate (2,3-dihydroxy-3-methylvalerate) into 2-oxo-3-methylpentanoate (2-oxo-3-methylvalerate) and of (2R)-2,3-dihydroxy-3-methylbutanoate (2,3-dihydroxyisovalerate) into 2-oxo-3-methylbutanoate (2-oxoisovalerate), the penultimate precursor to L-isoleucine and L-valine, respectively. The polypeptide is Dihydroxy-acid dehydratase (Streptococcus thermophilus (strain CNRZ 1066)).